The sequence spans 37 residues: Cytochrome b6-f complex subunit 5 (37 aa).

The helical transmembrane segment at 5-25 (FLFGIVLGLIPITLAGLFVTA) threads the bilayer.

This sequence belongs to the PetG family. As to quaternary structure, the 4 large subunits of the cytochrome b6-f complex are cytochrome b6, subunit IV (17 kDa polypeptide, PetD), cytochrome f and the Rieske protein, while the 4 small subunits are PetG, PetL, PetM and PetN. The complex functions as a dimer.

The protein resides in the plastid. It localises to the chloroplast thylakoid membrane. In terms of biological role, component of the cytochrome b6-f complex, which mediates electron transfer between photosystem II (PSII) and photosystem I (PSI), cyclic electron flow around PSI, and state transitions. PetG is required for either the stability or assembly of the cytochrome b6-f complex. This chain is Cytochrome b6-f complex subunit 5, found in Capsella bursa-pastoris (Shepherd's purse).